Here is a 93-residue protein sequence, read N- to C-terminus: UPF0473 protein RBAM_024480 (93 aa).

The protein belongs to the UPF0473 family.

This Bacillus velezensis (strain DSM 23117 / BGSC 10A6 / LMG 26770 / FZB42) (Bacillus amyloliquefaciens subsp. plantarum) protein is UPF0473 protein RBAM_024480.